The sequence spans 1077 residues: MARLFSPRPPPSEDLFYETYYSLSQQYPLLLLLLGIVLCALAALLAVAWASGRELTSDPSFLTTVLCALGGFSLLLGLASREQRLQRWTRPLSGLVWVALLALGHAFLFTGGVVSAWDQVSYFLFVIFTAYAMLPLGMRDAAVAGLASSLSHLLVLGLYLGPQPDSRPALLPQLAANAVLFLCGNVAGVYHKALMERALRATFREALSSLHSRRRLDTEKKHQEHLLLSILPAYLAREMKAEIMARLQAGQGSRPESTNNFHSLYVKRHQGVSVLYADIVGFTRLASECSPKELVLMLNELFGKFDQIAKEHECMRIKILGDCYYCVSGLPLSLPDHAINCVRMGLDMCRAIRKLRAATGVDINMRVGVHSGSVLCGVIGLQKWQYDVWSHDVTLANHMEAGGVPGRVHITGATLALLAGAYAVEDAGMEHRDPYLRELGEPTYLVIDPRAEEEDEKGTAGGLLSSLEGLKMRPSLLMTRYLESWGAAKPFAHLSHGDSPVSTSTPLPEKTLASFSTQWSLDRSRTPRGLDDELDTGDAKFFQVIEQLNSQKQWKQSKDFNPLTLYFREKEMEKEYRLSAIPAFKYYEACTFLVFLSNFIIQMLVTNRPPALAITYSITFLLFLLILFVCFSEDLMRCVLKGPKMLHWLPALSGLVATRPGLRIALGTATILLVFAMAITSLFFFPTSSDCPFQAPNVSSMISNLSWELPGSLPLISVPYSMHCCTLGFLSCSLFLHMSFELKLLLLLLWLAASCSLFLHSHAWLSECLIVRLYLGPLDSRPGVLKEPKLMGAISFFIFFFTLLVLARQNEYYCRLDFLWKKKLRQEREETETMENLTRLLLENVLPAHVAPQFIGQNRRNEDLYHQSYECVCVLFASVPDFKEFYSESNINHEGLECLRLLNEIIADFDELLSKPKFSGVEKIKTIGSTYMAATGLNATSGQDAQQDAERSCSHLGTMVEFAVALGSKLDVINKHSFNNFRLRVGLNHGPVVAGVIGAQKPQYDIWGNTVNVASRMESTGVLGKIQVTEETAWALQSLGYTCYSRGVIKVKGKGQLCTYFLNTDLTRTGPPSATLG.

At 1 to 28 (MARLFSPRPPPSEDLFYETYYSLSQQYP) the chain is on the cytoplasmic side. Helical transmembrane passes span 29 to 50 (LLLL…VAWA), 61 to 80 (FLTT…GLAS), 94 to 117 (GLVW…VSAW), 120 to 138 (VSYF…PLGM), 141 to 162 (AAVA…YLGP), and 170 to 190 (LLPQ…AGVY). The Cytoplasmic segment spans residues 191–585 (HKALMERALR…YRLSAIPAFK (395 aa)). Mg(2+) is bound by residues Asp278, Ile279, and Asp322. ATP-binding positions include 278 to 283 (DIVGFT), 320 to 322 (LGD), and Arg366. A Phosphoserine modification is found at Ser520. Phosphothreonine is present on Thr536. Transmembrane regions (helical) follow at residues 586–607 (YYEA…LVTN), 611–633 (ALAI…CFSE), and 664–687 (IALG…FFPT). The Extracellular portion of the chain corresponds to 688 to 714 (SSDCPFQAPNVSSMISNLSWELPGSLP). 2 N-linked (GlcNAc...) asparagine glycosylation sites follow: Asn697 and Asn704. The next 3 membrane-spanning stretches (helical) occupy residues 715–736 (LISV…SLFL), 744–764 (LLLL…SHAW), and 791–807 (MGAI…LVLA). Residues 808–1077 (RQNEYYCRLD…RTGPPSATLG (270 aa)) are Cytoplasmic-facing. ATP contacts are provided by residues Lys925, 1005–1007 (DIW), 1012–1016 (NVASR), and Lys1052.

This sequence belongs to the adenylyl cyclase class-4/guanylyl cyclase family. Mg(2+) serves as cofactor. Mn(2+) is required as a cofactor. As to expression, detected in the zona glomerulosa and the zona fasciculata in the adrenal gland (at protein level).

It is found in the cell membrane. Its subcellular location is the cytoplasm. The catalysed reaction is ATP = 3',5'-cyclic AMP + diphosphate. With respect to regulation, activated by forskolin. Insensitive to calcium/calmodulin. Stimulated by GNAS and by the G-protein beta and gamma subunit complex. Catalyzes the formation of the signaling molecule cAMP in response to G-protein signaling. The sequence is that of Adenylate cyclase type 4 (ADCY4) from Homo sapiens (Human).